Reading from the N-terminus, the 570-residue chain is Probable electron transfer flavoprotein-ubiquinone oxidoreductase (570 aa).

13–27 contributes to the FAD binding site; sequence VVIVGAGPAGLSAAI. Cys-515, Cys-539, Cys-542, and Cys-545 together coordinate [4Fe-4S] cluster. Residues 530–559 enclose the 4Fe-4S ferredoxin-type domain; it reads KRFQINAANCVHCKTCDIKDPSQNITWVTP.

The cofactor is [4Fe-4S] cluster. Requires FAD as cofactor.

The enzyme catalyses a ubiquinone + reduced [electron-transfer flavoprotein] = a ubiquinol + oxidized [electron-transfer flavoprotein] + H(+). Functionally, accepts electrons from ETF and reduces ubiquinone. This Acinetobacter baylyi (strain ATCC 33305 / BD413 / ADP1) protein is Probable electron transfer flavoprotein-ubiquinone oxidoreductase (etfD).